The primary structure comprises 214 residues: Probable maleylacetoacetate isomerase (214 aa).

Residues 4–84 (QKPVLYSYWR…YLEETHPDVP (81 aa)) form the GST N-terminal domain. Glutathione is bound by residues 14 to 19 (SSCSWR), valine 56, 68 to 69 (ES), glutamine 108, and 112 to 114 (NLK). A GST C-terminal domain is found at 89-212 (DPIKRAHARA…HPDNQPDTGL (124 aa)).

The protein belongs to the GST superfamily. Zeta family. It depends on glutathione as a cofactor.

Its subcellular location is the cytoplasm. It catalyses the reaction 4-maleylacetoacetate = 4-fumarylacetoacetate. It participates in amino-acid degradation; L-phenylalanine degradation; acetoacetate and fumarate from L-phenylalanine: step 5/6. In Caenorhabditis elegans, this protein is Probable maleylacetoacetate isomerase (gst-42).